The sequence spans 467 residues: Ammonium transporter Rh type C (467 aa).

Residues 1-9 (MAWNTNLRW) lie on the Cytoplasmic side of the membrane. The chain crosses the membrane as a helical span at residues 10 to 30 (RLPLLCLVLEVAMVVLFGLFV). At 31-61 (RYSPDADSSWSNEKRKGNITSDLENEFYYRY) the chain is on the extracellular side. N-linked (GlcNAc...) asparagine glycosylation occurs at N48. Residues 62-82 (PSFQDVHVMVFLGFGFLMTFL) form a helical membrane-spanning segment. Residues 83–86 (QRYG) are Cytoplasmic-facing. A helical transmembrane segment spans residues 87-107 (YCALGFNFLLAALGVQWALLM). Topologically, residues 108–131 (QGWFQYTKDRLILLGIKNLIDADS) are extracellular. The next 2 helical transmembrane spans lie at 132–152 (CVAS…PVQM) and 153–173 (LLMT…LLHV). Over 174–179 (LEVKDA) the chain is Extracellular. A helical membrane pass occupies residues 180–200 (GGSITIHIFGAYFGLTVTWIL). Residues 201-219 (YRHNLDHSRERQSSVYHSN) lie on the Cytoplasmic side of the membrane. Residues 220-240 (LFAMIGTLFLWIYWPSFNSAM) traverse the membrane as a helical segment. Residues 241–251 (SNYGDAQHRAA) are Extracellular-facing. A helical transmembrane segment spans residues 252–272 (INTYCSLAASVLTSVAMSSVL). Over 273–282 (HKKGKLDMVH) the chain is Cytoplasmic. The helical transmembrane segment at 283-303 (IQNATLAGGVGVGTAAEMMLM) threads the bilayer. Position 304 (P304) is a topological domain, extracellular. Residues 305 to 325 (YGALIVGFICGAVSTLGFVYL) form a helical membrane-spanning segment. Over 326–343 (TPFLESRLRIQDTCGIHN) the chain is Cytoplasmic. Residues 344–364 (LHGIPGLIGAIVGAVTAAYAS) traverse the membrane as a helical segment. Topologically, residues 365–391 (PDGDRGFVYPFGFHNEKDEKVQGRFQA) are extracellular. Residues 392-412 (FGLLLTLAIAMVGGTIMGLIL) traverse the membrane as a helical segment. The Cytoplasmic portion of the chain corresponds to 413–467 (KLPFWGQAMDEDCFDDSIYWEMHEEKSSSPEDHTHKPSVPTEPVEQPTSSATLAP). The segment covering 436-447 (EEKSSSPEDHTH) has biased composition (basic and acidic residues). A disordered region spans residues 436-467 (EEKSSSPEDHTHKPSVPTEPVEQPTSSATLAP). The span at 458 to 467 (QPTSSATLAP) shows a compositional bias: polar residues.

Belongs to the ammonium transporter (TC 2.A.49) family. Rh subfamily. In terms of assembly, homotrimer. N-glycosylated.

It is found in the cell membrane. The protein resides in the apical cell membrane. The enzyme catalyses NH4(+)(in) = NH4(+)(out). The catalysed reaction is methylamine(out) = methylamine(in). It carries out the reaction CO2(out) = CO2(in). Functionally, ammonium transporter involved in the maintenance of acid-base homeostasis. Transports ammonium and its related derivative methylammonium across the plasma membrane of epithelial cells likely contributing to renal transepithelial ammonia transport and ammonia metabolism. Postulated to primarily mediate an electroneutral bidirectional transport of NH3 ammonia species according to a mechanism that implies interaction of an NH4(+) ion with acidic residues of the pore entry followed by dissociation of NH4(+) into NH3 and H(+). As a result NH3 transits through the central pore and is protonated on the extracellular side reforming NH4(+). May act as a CO2 channel providing for renal acid secretion. The polypeptide is Ammonium transporter Rh type C (RHCG) (Oryctolagus cuniculus (Rabbit)).